Consider the following 502-residue polypeptide: Keratin-associated protein 16-1 (502 aa).

15 consecutive repeat copies span residues 4-8, 58-62, 73-77, 93-97, 108-112, 113-117, 133-137, 152-156, 177-181, 187-191, 212-216, 222-226, 272-276, 292-296, and 347-351. Residues 73 to 307 form a 15 X 5 AA repeats of C-C-X(3) region; that stretch reads CCEATICEPS…CQPVCPEPSP (235 aa). Residues 435 to 502 form a disordered region; the sequence is RQPCTDSDND…QPAASKPADR (68 aa). Positions 489-502 are enriched in low complexity; the sequence is AAAPQPAASKPADR.

The protein belongs to the KRTAP type 16 family. Interacts with hair keratins.

Its function is as follows. In the hair cortex, hair keratin intermediate filaments are embedded in an interfilamentous matrix, consisting of hair keratin-associated proteins (KRTAP), which are essential for the formation of a rigid and resistant hair shaft through their extensive disulfide bond cross-linking with abundant cysteine residues of hair keratins. The matrix proteins include the high-sulfur and high-glycine-tyrosine keratins. This is Keratin-associated protein 16-1 (Krtap16-1) from Mus musculus (Mouse).